Consider the following 428-residue polypeptide: D-amino acid dehydrogenase (428 aa).

Residue 3–17 (VVVLGSGVVGVTSAY) participates in FAD binding.

It belongs to the DadA oxidoreductase family. The cofactor is FAD.

It catalyses the reaction a D-alpha-amino acid + A + H2O = a 2-oxocarboxylate + AH2 + NH4(+). It participates in amino-acid degradation; D-alanine degradation; NH(3) and pyruvate from D-alanine: step 1/1. Oxidative deamination of D-amino acids. This chain is D-amino acid dehydrogenase, found in Paraburkholderia phymatum (strain DSM 17167 / CIP 108236 / LMG 21445 / STM815) (Burkholderia phymatum).